A 205-amino-acid chain; its full sequence is uncharacterized protein (205 aa).

The HTH tetR-type domain occupies 11–71 (KTRRALVDAA…EMVDEAGLML (61 aa)).

This is an uncharacterized protein from Haemophilus influenzae (strain ATCC 51907 / DSM 11121 / KW20 / Rd).